Here is a 152-residue protein sequence, read N- to C-terminus: Transcriptional regulator MraZ (152 aa).

SpoVT-AbrB domains are found at residues 5–52 (VTSI…PLHE) and 81–124 (ATEC…QDKQ).

It belongs to the MraZ family. In terms of assembly, forms oligomers.

It is found in the cytoplasm. Its subcellular location is the nucleoid. This Actinobacillus pleuropneumoniae serotype 5b (strain L20) protein is Transcriptional regulator MraZ.